Consider the following 582-residue polypeptide: 5-aminolevulinate synthase, erythroid-specific, mitochondrial (582 aa).

Arginine 158 lines the succinyl-CoA pocket. Pyridoxal 5'-phosphate is bound by residues cysteine 253 and phenylalanine 254. Succinyl-CoA-binding residues include serine 275 and arginine 294. 3 residues coordinate pyridoxal 5'-phosphate: serine 327, histidine 355, and threonine 383. Lysine 386 is an active-site residue. Residue lysine 386 is modified to N6-(pyridoxal phosphate)lysine. Pyridoxal 5'-phosphate is bound by residues threonine 415 and threonine 416. Succinyl-CoA is bound at residue threonine 503.

Belongs to the class-II pyridoxal-phosphate-dependent aminotransferase family. In terms of assembly, homodimer. Pyridoxal 5'-phosphate serves as cofactor.

Its subcellular location is the mitochondrion inner membrane. The enzyme catalyses succinyl-CoA + glycine + H(+) = 5-aminolevulinate + CO2 + CoA. It functions in the pathway porphyrin-containing compound metabolism; protoporphyrin-IX biosynthesis; 5-aminolevulinate from glycine: step 1/1. In terms of biological role, catalyzes the pyridoxal 5'-phosphate (PLP)-dependent condensation of succinyl-CoA and glycine to form aminolevulinic acid (ALA), with CoA and CO2 as by-products. Contributes significantly to heme formation during erythropoiesis. This Opsanus tau (Oyster toadfish) protein is 5-aminolevulinate synthase, erythroid-specific, mitochondrial (alas2).